A 110-amino-acid polypeptide reads, in one-letter code: Holo-[acyl-carrier-protein] synthase (110 aa).

Residues aspartate 8 and glutamate 54 each coordinate Mg(2+).

This sequence belongs to the P-Pant transferase superfamily. AcpS family. Requires Mg(2+) as cofactor.

The protein localises to the cytoplasm. The catalysed reaction is apo-[ACP] + CoA = holo-[ACP] + adenosine 3',5'-bisphosphate + H(+). In terms of biological role, transfers the 4'-phosphopantetheine moiety from coenzyme A to a Ser of acyl-carrier-protein. The chain is Holo-[acyl-carrier-protein] synthase from Mycoplasma mycoides subsp. mycoides SC (strain CCUG 32753 / NCTC 10114 / PG1).